The primary structure comprises 563 residues: Membrane protein insertase YidC (563 aa).

Residues 6–26 (TVLWMIFSFSLLLLWNNWQIH) traverse the membrane as a helical segment. The segment at 36–70 (PAPEAAATQQPKADANGTAASSTASIPSSPAAAPA) is disordered. Positions 54 to 70 (AASSTASIPSSPAAAPA) are enriched in low complexity. A run of 4 helical transmembrane segments spans residues 373–393 (WGWT…PLAA), 443–463 (LPMV…LASV), 482–502 (PFFI…KLNP), and 512–532 (VMMI…AGLV).

Belongs to the OXA1/ALB3/YidC family. Type 1 subfamily. Interacts with the Sec translocase complex via SecD. Specifically interacts with transmembrane segments of nascent integral membrane proteins during membrane integration.

The protein localises to the cell membrane. Required for the insertion and/or proper folding and/or complex formation of integral membrane proteins into the membrane. Involved in integration of membrane proteins that insert both dependently and independently of the Sec translocase complex, as well as at least some lipoproteins. Aids folding of multispanning membrane proteins. The sequence is that of Membrane protein insertase YidC from Bordetella bronchiseptica (strain ATCC BAA-588 / NCTC 13252 / RB50) (Alcaligenes bronchisepticus).